Here is a 632-residue protein sequence, read N- to C-terminus: Polygalacturonase non-catalytic subunit AroGP3 (632 aa).

The signal sequence occupies residues 1–27 (MHTKILLPSCILLLLLFTLSSLDVVVA). A propeptide spanning residues 28–109 (KDGDESGNPF…MCALDLLPSL (82 aa)) is cleaved from the precursor. N-linked (GlcNAc...) asparagine glycosylation is found at Asn125, Asn143, Asn258, Asn280, Asn336, Asn371, and Asn389. The 215-residue stretch at 417–631 (FFREKMLKSG…FENDMTWATA (215 aa)) folds into the BURP domain.

As to quaternary structure, interacts with polygalacturonase to form heterodimers.

Its subcellular location is the secreted. It localises to the extracellular space. The protein localises to the apoplast. It is found in the cell wall. Functionally, non-catalytic subunit of polygalacturonase. This chain is Polygalacturonase non-catalytic subunit AroGP3 (GP3), found in Solanum lycopersicum (Tomato).